The chain runs to 422 residues: L-threonine dehydratase biosynthetic IlvA (422 aa).

Lysine 56 carries the N6-(pyridoxal phosphate)lysine modification. Pyridoxal 5'-phosphate-binding positions include asparagine 83, 189 to 193 (GGGGL), and serine 315. The region spanning 339 to 413 (HYFILNFPQR…FDPSNIYINE (75 aa)) is the ACT-like domain.

This sequence belongs to the serine/threonine dehydratase family. In terms of assembly, homotetramer. Pyridoxal 5'-phosphate serves as cofactor.

It carries out the reaction L-threonine = 2-oxobutanoate + NH4(+). Its pathway is amino-acid biosynthesis; L-isoleucine biosynthesis; 2-oxobutanoate from L-threonine: step 1/1. In terms of biological role, catalyzes the anaerobic formation of alpha-ketobutyrate and ammonia from threonine in a two-step reaction. The first step involved a dehydration of threonine and a production of enamine intermediates (aminocrotonate), which tautomerizes to its imine form (iminobutyrate). Both intermediates are unstable and short-lived. The second step is the nonenzymatic hydrolysis of the enamine/imine intermediates to form 2-ketobutyrate and free ammonia. In the low water environment of the cell, the second step is accelerated by RidA. The chain is L-threonine dehydratase biosynthetic IlvA (ilvA) from Staphylococcus aureus (strain NCTC 8325 / PS 47).